Here is a 97-residue protein sequence, read N- to C-terminus: Large ribosomal subunit protein uL23 (97 aa).

Belongs to the universal ribosomal protein uL23 family. Part of the 50S ribosomal subunit. Contacts protein L29, and trigger factor when it is bound to the ribosome.

Its function is as follows. One of the early assembly proteins it binds 23S rRNA. One of the proteins that surrounds the polypeptide exit tunnel on the outside of the ribosome. Forms the main docking site for trigger factor binding to the ribosome. This Lactiplantibacillus plantarum (strain ATCC BAA-793 / NCIMB 8826 / WCFS1) (Lactobacillus plantarum) protein is Large ribosomal subunit protein uL23.